The primary structure comprises 234 residues: MADRGYSFSLTTFSPSGKLVQIEYALAAVAAGAPSVGIKASNGVVLATEKKQKSILYDEQSVHKIEPITKHIGMVYSGMGPDYRVLVRRARKLAQQYFLVYQEPIPTGQLVQRVASVMQEYTQSGGVRPFGVSLLIAGWDEDRPYLFQSDPSGAYFAWKATAMGKSYVNGKTFLEKRYNEDLELEDAIHTAILTLKESFEGQMTEENIEVGICNEAGFRRLSPAEVKDYLAAIA.

The residue at position 2 (A2) is an N-acetylalanine. Y121 is subject to Phosphotyrosine.

Belongs to the peptidase T1A family. As to quaternary structure, the 26S proteasome consists of a 20S proteasome core and two 19S regulatory subunits. The 20S proteasome core is composed of 28 subunits that are arranged in four stacked rings, resulting in a barrel-shaped structure. The two end rings are each formed by seven alpha subunits, and the two central rings are each formed by seven beta subunits. The catalytic chamber with the active sites is on the inside of the barrel.

It localises to the cytoplasm. The protein localises to the nucleus. Functionally, the proteasome is a multicatalytic proteinase complex which is characterized by its ability to cleave peptides with Arg, Phe, Tyr, Leu, and Glu adjacent to the leaving group at neutral or slightly basic pH. The proteasome has an ATP-dependent proteolytic activity. PSMA2 may have a potential regulatory effect on another component(s) of the proteasome complex through tyrosine phosphorylation. In Carassius auratus (Goldfish), this protein is Proteasome subunit alpha type-2 (psma2).